The following is a 306-amino-acid chain: MIKQKTLKHVVKTTGVGLHTGKKVTLTMRPASANDGIIYRRVDLNPVVEFFADPESVRDTQLCTCLVNENNIRISTIEHLNSALAAFGIDNVIIEVDAPEVPIMDGSASPFIFLLLNSGIKELNAPKKFLKLKETIRVQKDDKWAELSPYDGFRLDFSIDFKHPAIHENTQSYGFDFSAQTFILELSRARTFGFIKDIEYLQSKGLCLGGSFDCAIVMDDYRVLNEDGLRFEDEFVRHKMLDAIGDLFICGHNIIGAFSAFKSGHALNNQLLKAVLENQSAWEYVTFEHEEAPILFGHSLEMCFVR.

Zn(2+)-binding residues include His79, His238, and Asp242. His265 acts as the Proton donor in catalysis.

The protein belongs to the LpxC family. Requires Zn(2+) as cofactor.

It catalyses the reaction a UDP-3-O-[(3R)-3-hydroxyacyl]-N-acetyl-alpha-D-glucosamine + H2O = a UDP-3-O-[(3R)-3-hydroxyacyl]-alpha-D-glucosamine + acetate. It participates in glycolipid biosynthesis; lipid IV(A) biosynthesis; lipid IV(A) from (3R)-3-hydroxytetradecanoyl-[acyl-carrier-protein] and UDP-N-acetyl-alpha-D-glucosamine: step 2/6. Its function is as follows. Catalyzes the hydrolysis of UDP-3-O-myristoyl-N-acetylglucosamine to form UDP-3-O-myristoylglucosamine and acetate, the committed step in lipid A biosynthesis. This Hamiltonella defensa subsp. Acyrthosiphon pisum (strain 5AT) protein is UDP-3-O-acyl-N-acetylglucosamine deacetylase.